Here is a 91-residue protein sequence, read N- to C-terminus: MGRSLKKGPFADAHLLKKIDAQSDSDKKSVIKTWSRRSTIFPSFIGYTIAVYDGRKHVPVYIQDDMVGHKLGEFVPTRTFHGHGTDDKKTK.

The protein belongs to the universal ribosomal protein uS19 family.

Protein S19 forms a complex with S13 that binds strongly to the 16S ribosomal RNA. The sequence is that of Small ribosomal subunit protein uS19 from Lactiplantibacillus plantarum (strain ATCC BAA-793 / NCIMB 8826 / WCFS1) (Lactobacillus plantarum).